The sequence spans 181 residues: Cyclic AMP-dependent transcription factor ATF-3 (181 aa).

K78 participates in a covalent cross-link: Glycyl lysine isopeptide (Lys-Gly) (interchain with G-Cter in SUMO2). Residues 86 to 149 (DERKKRRRER…QHLIYMLNLH (64 aa)) enclose the bZIP domain. Residues 88–110 (RKKRRRERNKIAAAKCRNKKKEK) form a basic motif region. Residues 114–142 (LQKESEKLESVNAELKAQIEELKNEKQHL) form a leucine-zipper region. T162 bears the Phosphothreonine mark. K175 participates in a covalent cross-link: Glycyl lysine isopeptide (Lys-Gly) (interchain with G-Cter in SUMO2).

It belongs to the bZIP family. ATF subfamily. In terms of assembly, binds DNA as a homodimer or a heterodimer. Interacts with KAT5; promoting KAT5 autoacetylation and KAT5 deubiquitination by USP7.

It is found in the nucleus. This protein binds the cAMP response element (CRE) (consensus: 5'-GTGACGT[AC][AG]-3'), a sequence present in many viral and cellular promoters. Represses transcription from promoters with ATF sites. It may repress transcription by stabilizing the binding of inhibitory cofactors at the promoter. Functionally, activates transcription presumably by sequestering inhibitory cofactors away from the promoters. In terms of biological role, stress-induced isoform, counteracts the transcriptional repression of isoform 1. The sequence is that of Cyclic AMP-dependent transcription factor ATF-3 from Homo sapiens (Human).